We begin with the raw amino-acid sequence, 293 residues long: Probable chromosome 2-partitioning protein ParB (293 aa).

Belongs to the ParB family.

Functionally, involved in chromosome partition. Localize to both poles of the predivisional cell following completion of DNA replication. Binds to the DNA origin of replication. The protein is Probable chromosome 2-partitioning protein ParB (parB2) of Deinococcus radiodurans (strain ATCC 13939 / DSM 20539 / JCM 16871 / CCUG 27074 / LMG 4051 / NBRC 15346 / NCIMB 9279 / VKM B-1422 / R1).